Here is a 134-residue protein sequence, read N- to C-terminus: Small ribosomal subunit protein bS6 (134 aa).

The tract at residues 97 to 134 (TDVSPIKASEGREDRRSAPQREERNHDNSDEVSEESED) is disordered. Positions 105 to 125 (SEGREDRRSAPQREERNHDNS) are enriched in basic and acidic residues.

This sequence belongs to the bacterial ribosomal protein bS6 family.

Its function is as follows. Binds together with bS18 to 16S ribosomal RNA. The protein is Small ribosomal subunit protein bS6 of Marinomonas sp. (strain MWYL1).